We begin with the raw amino-acid sequence, 40 residues long: Photosystem II reaction center protein J (40 aa).

The chain crosses the membrane as a helical span at residues 10-30 (LWIIGTVTGILVIGLIGIFFF).

Belongs to the PsbJ family. As to quaternary structure, PSII is composed of 1 copy each of membrane proteins PsbA, PsbB, PsbC, PsbD, PsbE, PsbF, PsbH, PsbI, PsbJ, PsbK, PsbL, PsbM, PsbT, PsbX, PsbY, PsbZ, Psb30/Ycf12, at least 3 peripheral proteins of the oxygen-evolving complex and a large number of cofactors. It forms dimeric complexes.

The protein localises to the plastid membrane. Functionally, one of the components of the core complex of photosystem II (PSII). PSII is a light-driven water:plastoquinone oxidoreductase that uses light energy to abstract electrons from H(2)O, generating O(2) and a proton gradient subsequently used for ATP formation. It consists of a core antenna complex that captures photons, and an electron transfer chain that converts photonic excitation into a charge separation. The polypeptide is Photosystem II reaction center protein J (Cuscuta exaltata (Tall dodder)).